Here is a 207-residue protein sequence, read N- to C-terminus: Proteasome subunit beta 1 (207 aa).

Residues 1–9 constitute a propeptide, removed in mature form; by autocatalysis; the sequence is MWALDKIKG. The active-site Nucleophile is the threonine 10.

The protein belongs to the peptidase T1B family. As to quaternary structure, the 20S proteasome core is composed of 14 alpha and 14 beta subunits that assemble into four stacked heptameric rings, resulting in a barrel-shaped structure. The two inner rings, each composed of seven catalytic beta subunits, are sandwiched by two outer rings, each composed of seven alpha subunits. The catalytic chamber with the active sites is on the inside of the barrel. Has a gated structure, the ends of the cylinder being occluded by the N-termini of the alpha-subunits. Is capped at one or both ends by the proteasome regulatory ATPase, PAN.

The protein localises to the cytoplasm. It catalyses the reaction Cleavage of peptide bonds with very broad specificity.. Its activity is regulated as follows. The formation of the proteasomal ATPase PAN-20S proteasome complex, via the docking of the C-termini of PAN into the intersubunit pockets in the alpha-rings, triggers opening of the gate for substrate entry. Interconversion between the open-gate and close-gate conformations leads to a dynamic regulation of the 20S proteasome proteolysis activity. Functionally, component of the proteasome core, a large protease complex with broad specificity involved in protein degradation. The chain is Proteasome subunit beta 1 from Thermococcus sibiricus (strain DSM 12597 / MM 739).